Reading from the N-terminus, the 1083-residue chain is DNA primase (1083 aa).

The CHC2-type zinc-finger motif lies at 1022–1061; sequence CLRYPHRGGRTAPRTFVSLRVDHHNRLCISLAQQCFATKC.

It belongs to the herpesviridae DNA primase family. In terms of assembly, associates with the helicase and the primase-associated factor to form the helicase-primase factor.

Its subcellular location is the host nucleus. Functionally, essential component of the helicase/primase complex. Unwinds the DNA at the replication forks and generates single-stranded DNA for both leading and lagging strand synthesis. The primase initiates primer synthesis and thereby produces large amount of short RNA primers on the lagging strand that the polymerase elongates using dNTPs. In Varicella-zoster virus (strain Oka vaccine) (HHV-3), this protein is DNA primase.